Consider the following 515-residue polypeptide: Probable malate:quinone oxidoreductase (515 aa).

The protein belongs to the MQO family. It depends on FAD as a cofactor.

It catalyses the reaction (S)-malate + a quinone = a quinol + oxaloacetate. Its pathway is carbohydrate metabolism; tricarboxylic acid cycle; oxaloacetate from (S)-malate (quinone route): step 1/1. In Blochmanniella pennsylvanica (strain BPEN), this protein is Probable malate:quinone oxidoreductase.